A 133-amino-acid polypeptide reads, in one-letter code: Small ribosomal subunit protein uS11 (133 aa).

Belongs to the universal ribosomal protein uS11 family. As to quaternary structure, part of the 30S ribosomal subunit. Interacts with proteins S7 and S18. Binds to IF-3.

Located on the platform of the 30S subunit, it bridges several disparate RNA helices of the 16S rRNA. Forms part of the Shine-Dalgarno cleft in the 70S ribosome. The polypeptide is Small ribosomal subunit protein uS11 (Chlamydia pneumoniae (Chlamydophila pneumoniae)).